The primary structure comprises 337 residues: MTQVFQGRNFLAEKDFTREEFEYLIDFAAHLKDLKKRGVPHRYLEGKNIALLFEKTSTRTRAAFTTAAIDLGAHPEYLGANDIQLGKKESTEDTAKVLGRMFDGIEFRGFSQRMVEELGEFAGVPVWNGLTDEWHPTQMLADYLTVKENFGKLEGITLVYCGDGRNNVANSLLVAGTLMGVNVHIFSPKELFPDEEIVKLAEGFAKESGAHILVTDNADEAVKGADVLYTDVWVSMGEEDKFKERVELLQPYQVNMDLVKKANNENLIFLHCLPAFHDTNTVYGKDVADKYGVSEMEVTDEVFRSKYARHFDQAENRMHTIKAVMAATLGNLFIPKV.

Residues 57–60, Q84, R108, and 135–138 each bind carbamoyl phosphate; these read STRT and HPTQ. L-ornithine is bound by residues N167, D231, and 235–236; that span reads SM. Carbamoyl phosphate is bound by residues 272 to 273 and R317; that span reads CL.

The protein belongs to the aspartate/ornithine carbamoyltransferase superfamily. OTCase family.

It localises to the cytoplasm. It carries out the reaction carbamoyl phosphate + L-ornithine = L-citrulline + phosphate + H(+). Its pathway is amino-acid degradation; L-arginine degradation via ADI pathway; carbamoyl phosphate from L-arginine: step 2/2. Reversibly catalyzes the transfer of the carbamoyl group from carbamoyl phosphate (CP) to the N(epsilon) atom of ornithine (ORN) to produce L-citrulline. This chain is Ornithine carbamoyltransferase, found in Streptococcus uberis (strain ATCC BAA-854 / 0140J).